A 265-amino-acid chain; its full sequence is Small ribosomal subunit protein uS5 (265 aa).

Over residues 1 to 25 (MADTTTAAQADQKPTRAFGAGRPQR) the composition is skewed to low complexity. The interval 1 to 49 (MADTTTAAQADQKPTRAFGAGRPQRGAGGAPQRGGPRPQRGGQGETKSW) is disordered. An N-acetylalanine modification is found at A2. In terms of domain architecture, S5 DRBM spans 89-152 (LKDEVMKIVP…VAAKLSVIPV (64 aa)).

It belongs to the universal ribosomal protein uS5 family.

Functionally, component of the ribosome, a large ribonucleoprotein complex responsible for the synthesis of proteins in the cell. The small ribosomal subunit (SSU) binds messenger RNAs (mRNAs) and translates the encoded message by selecting cognate aminoacyl-transfer RNA (tRNA) molecules. The large subunit (LSU) contains the ribosomal catalytic site termed the peptidyl transferase center (PTC), which catalyzes the formation of peptide bonds, thereby polymerizing the amino acids delivered by tRNAs into a polypeptide chain. The nascent polypeptides leave the ribosome through a tunnel in the LSU and interact with protein factors that function in enzymatic processing, targeting, and the membrane insertion of nascent chains at the exit of the ribosomal tunnel. Plays a role in the assembly and function of the 40S ribosomal subunit. Mutations in this protein affects the control of translational fidelity. Involved in nucleolar processing of pre-18S ribosomal RNA and ribosome assembly. In Dictyostelium discoideum (Social amoeba), this protein is Small ribosomal subunit protein uS5 (rps2).